A 220-amino-acid chain; its full sequence is GTP cyclohydrolase 1 (220 aa).

Residues cysteine 110, histidine 113, and cysteine 181 each coordinate Zn(2+).

This sequence belongs to the GTP cyclohydrolase I family. In terms of assembly, toroid-shaped homodecamer, composed of two pentamers of five dimers.

The catalysed reaction is GTP + H2O = 7,8-dihydroneopterin 3'-triphosphate + formate + H(+). It participates in cofactor biosynthesis; 7,8-dihydroneopterin triphosphate biosynthesis; 7,8-dihydroneopterin triphosphate from GTP: step 1/1. The protein is GTP cyclohydrolase 1 of Baumannia cicadellinicola subsp. Homalodisca coagulata.